The sequence spans 35 residues: Flavodoxin (35 aa).

The region spanning 4–35 is the Flavodoxin-like domain; the sequence is IGLFYGTZTGKTESVAEIIDEFGDEVVTLDID.

It belongs to the flavodoxin family. FMN is required as a cofactor.

Functionally, low-potential electron donor to a number of redox enzymes. This chain is Flavodoxin, found in Nostoc sp. (strain MAC).